Here is a 702-residue protein sequence, read N- to C-terminus: Phosphoglycerol transferase I (702 aa).

Transmembrane regions (helical) follow at residues 5 to 24 (LLVS…RLAW), 73 to 95 (GYIA…VRIR), and 102 to 124 (GGGA…SPLY).

It belongs to the OpgB family.

It localises to the cell inner membrane. The enzyme catalyses a phosphatidylglycerol + a membrane-derived-oligosaccharide D-glucose = a 1,2-diacyl-sn-glycerol + a membrane-derived-oligosaccharide 6-(glycerophospho)-D-glucose.. Its pathway is glycan metabolism; osmoregulated periplasmic glucan (OPG) biosynthesis. Functionally, transfers a phosphoglycerol residue from phosphatidylglycerol to the membrane-bound nascent glucan backbones. This Xanthomonas axonopodis pv. citri (strain 306) protein is Phosphoglycerol transferase I.